We begin with the raw amino-acid sequence, 479 residues long: Pre-glycoprotein polyprotein GP complex (479 aa).

Gly2 is lipidated: N-myristoyl glycine; by host. The Extracellular portion of the chain corresponds to 2–17 (GQLISFFQDIPIFFEE). A helical membrane pass occupies residues 18–32 (ALNVALAVVTLLAII). Lys33 is a topological domain (cytoplasmic). A helical membrane pass occupies residues 34–53 (GIVNVWKSGILQLFVFLVLA). Extracellular segments lie at residues 54-58 (GRSCS) and 59-418 (FKVG…TLVD). Cys57 contacts Zn(2+). 3 disulfide bridges follow: Cys85–Cys221, Cys265–Cys278, and Cys287–Cys296. 5 N-linked (GlcNAc...) asparagine; by host glycosylation sites follow: Asn88, Asn125, Asn174, Asn202, and Asn214. N-linked (GlcNAc...) asparagine; by host glycosylation is found at Asn314, Asn351, Asn359, Asn376, and Asn381. A disulfide bridge connects residues Cys350 and Cys371. The helical transmembrane segment at 419–439 (LCFWSAIFFTTSLFLHLVGFP) threads the bilayer. Residues 440 to 479 (THRHIQGDPCPLPHRLDRNGACRCGRFQKLGKQVTWKRKH) lie on the Cytoplasmic side of the membrane. Residues His441, His443, Cys449, His453, Cys461, Cys463, and His479 each coordinate Zn(2+).

Belongs to the arenaviridae GPC protein family. In terms of assembly, homotetramer; disulfide-linked. As to quaternary structure, homotetramer. GP2 homotetramers bind through ionic interactions with GP1 homotetramers to form the GP complex together with the stable signal peptide. The GP-C polyprotein interacts with the host protease MBTPS1/SKI-1 resulting in the polyprotein processing. Post-translationally, specific enzymatic cleavages in vivo yield mature proteins. GP-C polyprotein is cleaved in the endoplasmic reticulum by the host protease MBTPS1. Only cleaved glycoprotein is incorporated into virions. The SSP remains stably associated with the GP complex following cleavage by signal peptidase and plays crucial roles in the trafficking of GP through the secretory pathway. In terms of processing, myristoylation is necessary for GP2-mediated fusion activity.

Its subcellular location is the virion membrane. The protein localises to the host endoplasmic reticulum membrane. It localises to the host Golgi apparatus membrane. The protein resides in the host cell membrane. Interacts with the host receptor. Mediates virus attachment to host TFRC. This attachment induces virion internalization predominantly through clathrin-mediated endocytosis. Functionally, class I viral fusion protein that directs fusion of viral and host endosomal membranes, leading to delivery of the nucleocapsid into the cytoplasm. Membrane fusion is mediated by irreversible conformational changes induced upon acidification in the endosome. Its function is as follows. Stable signal peptide (SSP): cleaved and functions as a signal peptide. In addition, it is also retained as the third component of the GP complex. The SSP is required for efficient glycoprotein expression, post-translational maturation cleavage of GP1 and GP2, glycoprotein transport to the cell surface plasma membrane, formation of infectious virus particles, and acid pH-dependent glycoprotein-mediated cell fusion. The sequence is that of Pre-glycoprotein polyprotein GP complex from Homo sapiens (Human).